A 299-amino-acid chain; its full sequence is GTPase Era (299 aa).

In terms of domain architecture, Era-type G spans 5–172 (KSGFVSIIGR…IDVLKTYLPE (168 aa)). Residues 13–20 (GRPNVGKS) form a G1 region. 13-20 (GRPNVGKS) is a GTP binding site. A G2 region spans residues 39 to 43 (QTTRN). The tract at residues 60-63 (DTPG) is G3. Residues 60–64 (DTPGI) and 122–125 (NKID) each bind GTP. Residues 122 to 125 (NKID) form a G4 region. Positions 151-153 (ISA) are G5. A KH type-2 domain is found at 203-280 (TSEEIPHAIG…YLELWVKVQR (78 aa)).

This sequence belongs to the TRAFAC class TrmE-Era-EngA-EngB-Septin-like GTPase superfamily. Era GTPase family. In terms of assembly, monomer.

The protein resides in the cytoplasm. Its subcellular location is the cell membrane. An essential GTPase that binds both GDP and GTP, with rapid nucleotide exchange. Plays a role in 16S rRNA processing and 30S ribosomal subunit biogenesis and possibly also in cell cycle regulation and energy metabolism. The protein is GTPase Era of Staphylococcus aureus (strain NCTC 8325 / PS 47).